A 366-amino-acid chain; its full sequence is MGCGGTLFYPLLITLSVALITYNIIISANAPLKQGFPGRSSSSDISIDPVIELPRGGGSRNNDGKRIRLFHTAVTASDSVYNTWQCRVMYYWFKKIQASAGPGSEMGGFTRILHSGKPDQYMDEIPTFVAQPLPSGMDQGYVVLNRPWAFVQWLQQTDIKEDYILMSEPDHIIVKPIPNLAKDGLGAAFPFFYIEPKKYEKVLRKYYPEVRGPVTNIDPIGNSPVIVGKDALKKIAPTWMNVSLAMKKDPEADKAFGWVLEMYAYAVSSALHGVSNILHKDFMIQPPWDIEVGDKYIIHYTYGCDYDMKGKLTYGKIGEWRFDKRSYDSKPPPRNLTMPPPGVSQSVVTLVKMINEATANIPNWGS.

The chain crosses the membrane as a helical; Signal-anchor span at residues 6-26 (TLFYPLLITLSVALITYNIII).

In terms of tissue distribution, ubiquitous.

The protein localises to the golgi apparatus. It is found in the cis-Golgi network membrane. It catalyses the reaction trans-4-hydroxy-L-prolyl-[protein] + UDP-beta-L-arabinofuranose = O-(beta-L-arabinofuranosyl)-trans-4-hydroxy-L-prolyl-[protein] + UDP + H(+). Functionally, glycosyltransferase involved in the O-arabinosylation of several proteins including extensins and small signaling peptides. Catalyzes the transfer of the initial L-arabinose to the hydroxyl group of Hyp residues. Contributes redundantly with HPAT2 and HPAT3 to arabinosylation of EXT3. This Arabidopsis thaliana (Mouse-ear cress) protein is Hydroxyproline O-arabinosyltransferase 1.